The chain runs to 156 residues: Small ribosomal subunit protein uS7 (156 aa).

It belongs to the universal ribosomal protein uS7 family. Part of the 30S ribosomal subunit. Contacts proteins S9 and S11.

One of the primary rRNA binding proteins, it binds directly to 16S rRNA where it nucleates assembly of the head domain of the 30S subunit. Is located at the subunit interface close to the decoding center, probably blocks exit of the E-site tRNA. This chain is Small ribosomal subunit protein uS7, found in Campylobacter hominis (strain ATCC BAA-381 / DSM 21671 / CCUG 45161 / LMG 19568 / NCTC 13146 / CH001A).